The following is a 133-amino-acid chain: ATP synthase epsilon chain, chloroplastic (133 aa).

Belongs to the ATPase epsilon chain family. F-type ATPases have 2 components, CF(1) - the catalytic core - and CF(0) - the membrane proton channel. CF(1) has five subunits: alpha(3), beta(3), gamma(1), delta(1), epsilon(1). CF(0) has three main subunits: a, b and c.

It localises to the plastid. Its subcellular location is the chloroplast thylakoid membrane. Produces ATP from ADP in the presence of a proton gradient across the membrane. The protein is ATP synthase epsilon chain, chloroplastic of Helianthus annuus (Common sunflower).